The primary structure comprises 112 residues: UPF0060 membrane protein Daro_2632 (112 aa).

The next 4 membrane-spanning stretches (helical) occupy residues 7-27 (VLGL…LPWL), 34-54 (PVWL…LLTL), 59-79 (AGRI…IWLW), and 89-109 (WDLV…LQPA).

It belongs to the UPF0060 family.

The protein localises to the cell inner membrane. This is UPF0060 membrane protein Daro_2632 from Dechloromonas aromatica (strain RCB).